A 136-amino-acid chain; its full sequence is Large ribosomal subunit protein uL16 (136 aa).

The protein belongs to the universal ribosomal protein uL16 family. Part of the 50S ribosomal subunit.

Binds 23S rRNA and is also seen to make contacts with the A and possibly P site tRNAs. This Rickettsia typhi (strain ATCC VR-144 / Wilmington) protein is Large ribosomal subunit protein uL16.